The following is a 286-amino-acid chain: Probable aquaporin PIP2-5 (286 aa).

Met-1 bears the N-acetylmethionine mark. Over residues 1 to 18 the composition is skewed to basic and acidic residues; it reads MTKEVVGDKRSFSGKDYQ. Positions 1-23 are disordered; sequence MTKEVVGDKRSFSGKDYQDPPPE. The Cytoplasmic portion of the chain corresponds to 1–38; sequence MTKEVVGDKRSFSGKDYQDPPPEPLFDATELGKWSFYR. Lys-3 carries the N6,N6-dimethyllysine modification. A helical membrane pass occupies residues 39–59; the sequence is ALIAEFIATLLFLYVTIMTVI. Residues 60 to 75 are Extracellular-facing; it reads GYKSQTDPALNPDQCT. A helical transmembrane segment spans residues 76-96; sequence GVGVLGIAWAFGGMIFILVYC. The Cytoplasmic portion of the chain corresponds to 97–124; that stretch reads TAGISGGHINPAVTFGLLLARKVTLVRA. An NPA 1 motif is present at residues 106-108; the sequence is NPA. A helical membrane pass occupies residues 125–145; that stretch reads VMYMVAQCLGAICGVALVKAF. The Extracellular portion of the chain corresponds to 146 to 165; the sequence is QSAYFTRYGGGANGLSDGYS. Residues 166–186 traverse the membrane as a helical segment; that stretch reads IGTGVAAEIIGTFVLVYTVFS. Over 187–200 the chain is Cytoplasmic; the sequence is ATDPKRSARDSHVP. The chain crosses the membrane as a helical span at residues 201-221; sequence VLAPLPIGFAVFIVHLATIPI. Residues 222-248 are Extracellular-facing; that stretch reads TGTGINPARSLGAAIIYNKDKAWDHHW. Residues 227-229 carry the NPA 2 motif; the sequence is NPA. A helical membrane pass occupies residues 249-269; that stretch reads IFWVGPFAGAAIAAFYHQFVL. At 270–286 the chain is on the cytoplasmic side; it reads RAGAIKALGSFRSQPHV. Ser-279 and Ser-282 each carry phosphoserine.

It belongs to the MIP/aquaporin (TC 1.A.8) family. PIP (TC 1.A.8.11) subfamily. Expressed in green siliques.

The protein resides in the cell membrane. Its function is as follows. Aquaporins facilitate the transport of water and small neutral solutes across cell membranes. The chain is Probable aquaporin PIP2-5 (PIP2-5) from Arabidopsis thaliana (Mouse-ear cress).